The primary structure comprises 350 residues: Protein CONSERVED ONLY IN THE GREEN LINEAGE 160, chloroplastic (350 aa).

A chloroplast-targeting transit peptide spans 1–46 (MAILSYISATSTTPPIPQDQSPNSRLPTKIILPNKKPEKWSTGVAP). Positions 7-26 (ISATSTTPPIPQDQSPNSRL) are enriched in polar residues. Residues 7 to 58 (ISATSTTPPIPQDQSPNSRLPTKIILPNKKPEKWSTGVAPGEYGGPPTTTKL) form a disordered region. Residue serine 117 is modified to Phosphoserine. A run of 4 helical transmembrane segments spans residues 213 to 233 (KNKI…SAYI), 239 to 259 (IALS…MLGN), 276 to 296 (ANQP…RWNA), and 304 to 324 (FMHL…IATF).

The protein resides in the plastid. It is found in the chloroplast thylakoid membrane. Its function is as follows. Facilitates the assembly of the membrane proton channel of the chloroplastic F-type ATPase. Specifically required for the efficient assembly and integration of the CF(0) subunit c into the chloroplastic ATPase complex in the thylakoid membrane. This Arabidopsis thaliana (Mouse-ear cress) protein is Protein CONSERVED ONLY IN THE GREEN LINEAGE 160, chloroplastic.